Reading from the N-terminus, the 807-residue chain is Glycerol-3-phosphate acyltransferase (807 aa).

An HXXXXD motif motif is present at residues 308 to 313 (CHRSHM).

It belongs to the GPAT/DAPAT family.

Its subcellular location is the cell inner membrane. It catalyses the reaction sn-glycerol 3-phosphate + an acyl-CoA = a 1-acyl-sn-glycero-3-phosphate + CoA. The protein operates within phospholipid metabolism; CDP-diacylglycerol biosynthesis; CDP-diacylglycerol from sn-glycerol 3-phosphate: step 1/3. The protein is Glycerol-3-phosphate acyltransferase of Shewanella halifaxensis (strain HAW-EB4).